Consider the following 24-residue polypeptide: Humanin-like 3 (24 aa).

This sequence belongs to the humanin family. In terms of tissue distribution, highly expressed in testis. Also expressed in kidney, heart, skeletal muscles and brain.

Its subcellular location is the secreted. It is found in the cytoplasm. Plays a role as a neuroprotective and antiapoptotic factor. The chain is Humanin-like 3 from Homo sapiens (Human).